Here is a 660-residue protein sequence, read N- to C-terminus: Neurexin-2-beta (660 aa).

The segment covering 1–10 has biased composition (gly residues); that stretch reads MPPGGSGQGG. The disordered stretch occupies residues 1-27; that stretch reads MPPGGSGQGGCPRRPPALAGPLPPPPP. The N-terminal stretch at 1–46 is a signal peptide; the sequence is MPPGGSGQGGCPRRPPALAGPLPPPPPPPPLPLLLGLLLLLGAAEG. Residues 47–584 are Extracellular-facing; the sequence is ARVSSSLSTT…EVIRESSSTT (538 aa). The region spanning 87–295 is the Laminin G-like domain; sequence TTYIFGKGGA…HLRLVGEGPS (209 aa). Positions 139 and 156 each coordinate Ca(2+). Residue Asn186 is glycosylated (N-linked (GlcNAc...) asparagine). Ca(2+) contacts are provided by Ile238 and Asn240. Ser350 carries O-linked (Xyl...) (heparan sulfate) serine glycosylation. Disordered stretches follow at residues 408 to 458 and 537 to 571; these read ATQD…LPPT and EPRR…RGPP. An N-linked (GlcNAc...) asparagine glycan is attached at Asn561. A helical membrane pass occupies residues 585 to 605; the sequence is GMVVGIVAAAALCILILLYAM. Topologically, residues 606-660 are cytoplasmic; that stretch reads YKYRNRDEGSYQVDQSRNYISNSAQSNGAVVKEKAPAAPKTPSKAKKNKDKEYYV. The segment at 627–660 is disordered; it reads NSAQSNGAVVKEKAPAAPKTPSKAKKNKDKEYYV.

This sequence belongs to the neurexin family. Interacts (via cytoplasmic C-terminal region) with CASK. Specific isoforms bind alpha-dystroglycan and neuroligins NLGN1, NLGN2 and NLGN3. Interacts with CBLN1, CBLN2 and, less avidly, with CBLN4. Interacts with CLSTN3. O-glycosylated; contains heparan sulfate. Heparan sulfate attachment is required for synapse development by mediating interactions with neuroligins.

The protein resides in the presynaptic cell membrane. Functionally, neuronal cell surface protein that may be involved in cell recognition and cell adhesion. The sequence is that of Neurexin-2-beta from Mus musculus (Mouse).